Consider the following 288-residue polypeptide: Prohibitin-1, mitochondrial (288 aa).

The Mitochondrial matrix segment spans residues 1 to 10; sequence MNNVKVPKIP. Residues 11-30 traverse the membrane as a helical; Signal-anchor for type II membrane protein segment; it reads GGGAISTLLKVGIIGGLGLY. Topologically, residues 31 to 288 are mitochondrial intermembrane; that stretch reads GATHSLYNVE…GMNLDVDAKN (258 aa). The stretch at 186–219 forms a coiled coil; that stretch reads KEFTAAIEAKQVAAQEAERAKFIVEKAEQDKRSA.

Belongs to the prohibitin family. As to quaternary structure, component of a prohibitin multimeric complex in mitochondrial membranes. Mostly expressed in proliferative tissues, including vasculature, shoot and root apical tissues.

Its subcellular location is the mitochondrion inner membrane. In terms of biological role, prohibitin probably acts as a holdase/unfoldase for the stabilization of newly synthesized mitochondrial proteins. The protein is Prohibitin-1, mitochondrial (PHB1) of Arabidopsis thaliana (Mouse-ear cress).